Here is a 149-residue protein sequence, read N- to C-terminus: Hut operon positive regulatory protein (149 aa).

The protein belongs to the HutP family. As to quaternary structure, homohexamer.

Its function is as follows. Antiterminator that binds to cis-acting regulatory sequences on the mRNA in the presence of histidine, thereby suppressing transcription termination and activating the hut operon for histidine utilization. In Geobacillus sp. (strain WCH70), this protein is Hut operon positive regulatory protein.